A 145-amino-acid polypeptide reads, in one-letter code: Small ribosomal subunit protein uS9 (145 aa).

Residues 1 to 13 (MATDQHSNKSNVS) are compositionally biased toward polar residues. The disordered stretch occupies residues 1-24 (MATDQHSNKSNVSAARKPLSPSPT).

This sequence belongs to the universal ribosomal protein uS9 family.

It localises to the cytoplasm. In Lupinus polyphyllus (Large-leaved lupine), this protein is Small ribosomal subunit protein uS9 (RPS16).